The primary structure comprises 452 residues: Probable diguanylate cyclase DgcT (452 aa).

The Cytoplasmic portion of the chain corresponds to 1–7 (MEKDYLR). The helical transmembrane segment at 8–28 (ISSTVLVSLLFGLALVLVNSW) threads the bilayer. At 29–45 (FNQPGVEEVVPRSTYLM) the chain is on the periplasmic side. The chain crosses the membrane as a helical span at residues 46–66 (VMIALFFIDTVAFIFMQLYFI). Over 67-74 (YDRRQFSN) the chain is Cytoplasmic. A helical membrane pass occupies residues 75–95 (CVLSLAFLSCLIYFVITVIII). The Periplasmic segment spans residues 96 to 111 (QQIIEERLTSSVVQND). The chain crosses the membrane as a helical span at residues 112–132 (IAIYYLFRQMSLCILIFLALV). At 133 to 148 (NKVSENTKQRNLFSKK) the chain is on the cytoplasmic side. The helical transmembrane segment at 149 to 169 (MTLCISLFFVFGGPIVAHILS) threads the bilayer. Over 170 to 195 (SHYESYNLHIAELTNENGQVVWKASY) the chain is Periplasmic. A helical membrane pass occupies residues 196–216 (VTIMIFMWLTLLSVNLYFNGL). At 217-219 (RYD) the chain is on the cytoplasmic side. The chain crosses the membrane as a helical span at residues 220–240 (IWNGVTVIAFCAVLYNISLLF). The Periplasmic segment spans residues 241–254 (MSRYSVSTWYISRT). Residues 255–275 (IEVVSKLTVMVIFMCHIFSAL) form a helical membrane-spanning segment. The Cytoplasmic segment spans residues 276–452 (RVTKNIAHRD…RDVVNFCESP (177 aa)). The GGDEF domain maps to 310 to 445 (TPYCVMIMDI…GRNKVVVRDV (136 aa)). Mg(2+)-binding residues include Asp-318 and Ile-319. Residues Asn-326, His-331, and Asp-335 each contribute to the substrate site. Glu-361 provides a ligand contact to Mg(2+). Glu-361 acts as the Proton acceptor in catalysis. Arg-381 is a binding site for substrate.

Homodimer. Requires Mg(2+) as cofactor.

It is found in the cell inner membrane. The enzyme catalyses 2 GTP = 3',3'-c-di-GMP + 2 diphosphate. Its pathway is purine metabolism; 3',5'-cyclic di-GMP biosynthesis. In terms of biological role, probably catalyzes the synthesis of cyclic-di-GMP (c-di-GMP) via the condensation of 2 GTP molecules. Overexpression leads to a strong repression of swimming; swimming returns to normal when residues 359-360 are both mutated to Ala. Overexpression also leads to a 20-fold increase in c-di-GMP levels in vivo. Cyclic-di-GMP is a second messenger which controls cell surface-associated traits in bacteria. This is Probable diguanylate cyclase DgcT from Escherichia coli (strain K12).